The chain runs to 472 residues: MSLTQSAKLHIIHQSIGKITTRLYDTSPFHGDSHCKQRRVKDNCIQFNMNISNVLKCYSEIESFSINQRIRRSISLFLSILRSFYSMRMRLLDLFITSSIPVAKILLITGIGFYLALDQVNILNHDARKQLNNIVFYVFSPSLVASSLSETITYESMVKMWFMPLNVLLTFIIGSFLGWIVIKITKPPSHLRGIIVGCCAAGNLGNMPLIIIPAICNEKGSPFGDPESCEKFGLGYIALSMAIGAIYIWTYVYNLMRMLANPAGETAINSTSSTMPLISPKVEVAEQVGTWGKVKQRVCSVAEKINLRTIFAPSTIAALIALAVGLNPLLRKLLVGNTAPLRVIEDSVSLLGDGAIPVLTLIVGGNLLNGLRGSGINKSVIMGVVVVRYLLLPILGVFIVRGAHYLGLVTSEPLYQFVLLLQYVVPPAMNLGTITQLFGSGESECSVILFWSYALASVSLTVWPTFFMWLVA.

The Lumenal segment spans residues 1 to 93; sequence MSLTQSAKLH…FYSMRMRLLD (93 aa). The chain crosses the membrane as a helical span at residues 94–114; the sequence is LFITSSIPVAKILLITGIGFY. The Cytoplasmic portion of the chain corresponds to 115–133; it reads LALDQVNILNHDARKQLNN. Residues 134–154 traverse the membrane as a helical segment; that stretch reads IVFYVFSPSLVASSLSETITY. Topologically, residues 155 to 161 are lumenal; sequence ESMVKMW. A helical membrane pass occupies residues 162 to 182; the sequence is FMPLNVLLTFIIGSFLGWIVI. The Cytoplasmic segment spans residues 183–193; it reads KITKPPSHLRG. A helical membrane pass occupies residues 194–214; sequence IIVGCCAAGNLGNMPLIIIPA. The Lumenal segment spans residues 215–231; the sequence is ICNEKGSPFGDPESCEK. Residues 232–252 traverse the membrane as a helical segment; it reads FGLGYIALSMAIGAIYIWTYV. Over 253 to 309 the chain is Cytoplasmic; that stretch reads YNLMRMLANPAGETAINSTSSTMPLISPKVEVAEQVGTWGKVKQRVCSVAEKINLRT. Residues 310–330 traverse the membrane as a helical segment; it reads IFAPSTIAALIALAVGLNPLL. Residues 331–347 lie on the Lumenal side of the membrane; sequence RKLLVGNTAPLRVIEDS. A helical transmembrane segment spans residues 348 to 368; sequence VSLLGDGAIPVLTLIVGGNLL. Over 369-379 the chain is Cytoplasmic; sequence NGLRGSGINKS. A helical membrane pass occupies residues 380–400; it reads VIMGVVVVRYLLLPILGVFIV. The Lumenal segment spans residues 401 to 413; sequence RGAHYLGLVTSEP. The chain crosses the membrane as a helical span at residues 414-434; sequence LYQFVLLLQYVVPPAMNLGTI. Topologically, residues 435-446 are cytoplasmic; that stretch reads TQLFGSGESECS. The chain crosses the membrane as a helical span at residues 447–467; sequence VILFWSYALASVSLTVWPTFF. Over 468-472 the chain is Lumenal; sequence MWLVA.

The protein belongs to the auxin efflux carrier (TC 2.A.69.2) family. In terms of tissue distribution, expressed in flowers.

It is found in the endoplasmic reticulum membrane. Its function is as follows. Involved in cellular auxin homeostasis by regulating auxin metabolism. Regulates intracellular auxin accumulation at the endoplasmic reticulum and thus auxin availability for nuclear auxin signaling. The sequence is that of Protein PIN-LIKES 1 from Arabidopsis thaliana (Mouse-ear cress).